A 1449-amino-acid polypeptide reads, in one-letter code: VWFA and cache domain-containing protein CG16868 (1449 aa).

Positions 1-23 (MWPNSNLNAVLLILAVLACPTSS) are cleaved as a signal peptide. The Extracellular portion of the chain corresponds to 24 to 1220 (QHVPLAMANS…NPQREQHAYS (1197 aa)). 6 N-linked (GlcNAc...) asparagine glycosylation sites follow: asparagine 32, asparagine 112, asparagine 153, asparagine 407, asparagine 447, and asparagine 497. The 222-residue stretch at 320–541 (FVLFLIDVGS…TSLPQTSSRI (222 aa)) folds into the VWFA domain. The Cache 1 domain maps to 557 to 639 (VHPPVVDADS…PRPLIQRETS (83 aa)). Residues asparagine 649, asparagine 668, and asparagine 707 are each glycosylated (N-linked (GlcNAc...) asparagine). The 46-residue stretch at 889–934 (TAPYLDAGGAGYIITIAHTIFEGKAHALHSAQQDRPVAVVALDVPY) folds into the Cache 2 domain. N-linked (GlcNAc...) asparagine glycans are attached at residues asparagine 1015, asparagine 1025, asparagine 1059, and asparagine 1111. A helical membrane pass occupies residues 1221–1241 (AFGPLGGAIVVLVMVIGFAIY). The Cytoplasmic segment spans residues 1242 to 1449 (CYRHNLDAQT…VHRHMETAES (208 aa)). 2 disordered regions span residues 1307–1339 (YHVSSGSSYRRPPNGESDHGYSTMTPHEDSSDQ) and 1352–1416 (DKRH…GGSV). Residues 1359 to 1369 (DTMSISTSISS) are compositionally biased toward low complexity. The segment covering 1370–1392 (PTNRQQSSSQPNTHPYLSNQPTS) has biased composition (polar residues).

It belongs to the calcium channel subunit alpha-2/delta family.

The protein localises to the membrane. This chain is VWFA and cache domain-containing protein CG16868, found in Drosophila melanogaster (Fruit fly).